The chain runs to 75 residues: Small integral membrane protein 7 (75 aa).

An N-terminal signal peptide occupies residues 1 to 17 (MIGDILLFGTLLMNAGA). Residues 18 to 53 (VLNFKLKKKDTQGFGEESREPSTGDNIREFLLSLRY) are Extracellular-facing. The chain crosses the membrane as a helical span at residues 54-74 (FRIFIALWNIFMMFCMIVLFG). Residue Ser-75 is a topological domain, cytoplasmic.

It belongs to the SMIM7 family.

It localises to the membrane. The chain is Small integral membrane protein 7 (SMIM7) from Homo sapiens (Human).